The chain runs to 228 residues: Leucyl/phenylalanyl-tRNA--protein transferase (228 aa).

The protein belongs to the L/F-transferase family.

Its subcellular location is the cytoplasm. The catalysed reaction is N-terminal L-lysyl-[protein] + L-leucyl-tRNA(Leu) = N-terminal L-leucyl-L-lysyl-[protein] + tRNA(Leu) + H(+). It catalyses the reaction N-terminal L-arginyl-[protein] + L-leucyl-tRNA(Leu) = N-terminal L-leucyl-L-arginyl-[protein] + tRNA(Leu) + H(+). It carries out the reaction L-phenylalanyl-tRNA(Phe) + an N-terminal L-alpha-aminoacyl-[protein] = an N-terminal L-phenylalanyl-L-alpha-aminoacyl-[protein] + tRNA(Phe). Functions in the N-end rule pathway of protein degradation where it conjugates Leu, Phe and, less efficiently, Met from aminoacyl-tRNAs to the N-termini of proteins containing an N-terminal arginine or lysine. This chain is Leucyl/phenylalanyl-tRNA--protein transferase, found in Thiobacillus denitrificans (strain ATCC 25259 / T1).